Reading from the N-terminus, the 310-residue chain is Tagatose-6-phosphate kinase (310 aa).

It belongs to the carbohydrate kinase PfkB family. LacC subfamily.

It catalyses the reaction D-tagatofuranose 6-phosphate + ATP = D-tagatofuranose 1,6-bisphosphate + ADP + H(+). The protein operates within carbohydrate metabolism; D-tagatose 6-phosphate degradation; D-glyceraldehyde 3-phosphate and glycerone phosphate from D-tagatose 6-phosphate: step 1/2. The protein is Tagatose-6-phosphate kinase of Streptococcus mutans serotype c (strain ATCC 700610 / UA159).